A 313-amino-acid polypeptide reads, in one-letter code: PDZ domain-containing protein GIPC2 (313 aa).

Positions K14 to A27 are enriched in basic and acidic residues. The disordered stretch occupies residues K14–S34. Positions E117–E197 constitute a PDZ domain.

This sequence belongs to the GIPC family. Probably interacts with SEMA5A.

It is found in the cytoplasm. The protein is PDZ domain-containing protein GIPC2 (GIPC2) of Bos taurus (Bovine).